The primary structure comprises 314 residues: Replication initiation protein (314 aa).

This sequence belongs to the plasmid replication initiation factor family.

Its function is as follows. This protein is probably a specific topoisomerase involved in initiating replication. This protein is specifically required and may be rate-limiting for replication of the plasmid in vivo. The protein is Replication initiation protein (repC) of Staphylococcus aureus.